We begin with the raw amino-acid sequence, 208 residues long: Methyl-CpG-binding domain protein 3-like 4 (208 aa).

Belongs to the MBD3L family.

This is Methyl-CpG-binding domain protein 3-like 4 (MBD3L4) from Homo sapiens (Human).